Reading from the N-terminus, the 432-residue chain is Alcohol acyltransferase 9 (432 aa).

Residues His-156 and Asp-379 each act as proton acceptor in the active site.

The protein belongs to the plant acyltransferase family. In terms of tissue distribution, expressed in fruit.

The enzyme catalyses 2-(methylsulfanyl)acetyl-CoA + butan-1-ol = butyl 2-(methylsulfanyl)acetate + CoA. It catalyses the reaction ethanol + acetyl-CoA = ethyl acetate + CoA. It carries out the reaction butan-1-ol + acetyl-CoA = butyl acetate + CoA. The catalysed reaction is butan-1-ol + propanoyl-CoA = butyl propanoate + CoA. Functionally, involved in the biosynthesis of volatile esters which confer kiwifruit flavor. Alcohol acyl transferase that can use a wide range of alcohols as substrate to produce esters. Exhibits acetyl-CoA:alcohol O-acyltransferase activity. The sequence is that of Alcohol acyltransferase 9 from Actinidia deliciosa (Kiwi).